The primary structure comprises 293 residues: MDFIAILIGLGPLLGWGLFPTIASKFGGRPVNQIFGATVGTLIFAIVLALFKGIGLPGGMALVFSLISGAGWAFGQIITFKAFELVGSSRAMPITTAFQLLGASLWGVFALGNWPGITNKIIGFLALLVILIGARMTVWTETKQQEYSKNLRSAVLLLLVGEIGYWIYSAAPQATDIGGFKAFLPQAIGMVIVAVIYALMNMSKGNAFKEKVSWQQIISGFFFAFAALTYLISAQPNMNGLATGFVLSQTSVVLATLTGIFFLNQKKTSKELMITIVGLVLILVAASITVFIK.

A run of 10 helical transmembrane segments spans residues 5 to 24 (AILIGLGPLLGWGLFPTIAS), 34 to 51 (IFGATVGTLIFAIVLALF), 58 to 80 (GGMALVFSLISGAGWAFGQIITF), 95 to 114 (TTAFQLLGASLWGVFALGNW), 121 to 138 (IIGFLALLVILIGARMTV), 153 to 170 (SAVLLLLVGEIGYWIYSA), 177 to 199 (IGGFKAFLPQAIGMVIVAVIYAL), 212 to 234 (VSWQQIISGFFFAFAALTYLISA), 241 to 263 (LATGFVLSQTSVVLATLTGIFFL), and 273 to 292 (MITIVGLVLILVAASITVFI).

The protein belongs to the GRP transporter (TC 2.A.7.5) family.

The protein localises to the cell membrane. Functionally, could be involved in the uptake of ribose. The sequence is that of Putative ribose uptake protein RbsU (rbsU) from Staphylococcus epidermidis (strain ATCC 12228 / FDA PCI 1200).